A 157-amino-acid chain; its full sequence is D-aminoacyl-tRNA deacylase (157 aa).

A Gly-cisPro motif, important for rejection of L-amino acids motif is present at residues 137–138 (GP).

This sequence belongs to the DTD family. Homodimer.

The protein localises to the cytoplasm. The enzyme catalyses glycyl-tRNA(Ala) + H2O = tRNA(Ala) + glycine + H(+). The catalysed reaction is a D-aminoacyl-tRNA + H2O = a tRNA + a D-alpha-amino acid + H(+). Functionally, an aminoacyl-tRNA editing enzyme that deacylates mischarged D-aminoacyl-tRNAs. Also deacylates mischarged glycyl-tRNA(Ala), protecting cells against glycine mischarging by AlaRS. Acts via tRNA-based rather than protein-based catalysis; rejects L-amino acids rather than detecting D-amino acids in the active site. By recycling D-aminoacyl-tRNA to D-amino acids and free tRNA molecules, this enzyme counteracts the toxicity associated with the formation of D-aminoacyl-tRNA entities in vivo and helps enforce protein L-homochirality. The protein is D-aminoacyl-tRNA deacylase of Roseiflexus castenholzii (strain DSM 13941 / HLO8).